A 405-amino-acid chain; its full sequence is Tryptophan synthase beta chain (405 aa).

An N6-(pyridoxal phosphate)lysine modification is found at K98.

This sequence belongs to the TrpB family. As to quaternary structure, tetramer of two alpha and two beta chains. The cofactor is pyridoxal 5'-phosphate.

The catalysed reaction is (1S,2R)-1-C-(indol-3-yl)glycerol 3-phosphate + L-serine = D-glyceraldehyde 3-phosphate + L-tryptophan + H2O. Its pathway is amino-acid biosynthesis; L-tryptophan biosynthesis; L-tryptophan from chorismate: step 5/5. Its function is as follows. The beta subunit is responsible for the synthesis of L-tryptophan from indole and L-serine. The chain is Tryptophan synthase beta chain from Methylococcus capsulatus (strain ATCC 33009 / NCIMB 11132 / Bath).